A 325-amino-acid polypeptide reads, in one-letter code: MIARIWSGESPLWRLLLPLSWLYGLVSGAIRLSYKLGFKRAWRAPVPVVVVGNLTAGGNGKTPVVIWLVEKLQQRGVRVGVVSRGYGGKAAAYPLLLTPETTTAEAGDEPVLIYQRTGAPVAVAPERAAAVKAILAAHNVQIIITDDGLQHYRLARDIEIVVIDGVRRFGNGWWLPAGPMRERASRLKTVDAAIVNGGVARAGEIPMQLAPGLAVNLRTGARCDVAQLSNIVAMAGIGHPPRFFATLEACGAHPQKCVPLADHQTLAPADVQALVGEGQTLVMTEKDAVKCCAFAEDNWWFLPVDARLSGEQPDKLLEHITSLVR.

55–62 (TAGGNGKT) lines the ATP pocket.

It belongs to the LpxK family.

The catalysed reaction is a lipid A disaccharide + ATP = a lipid IVA + ADP + H(+). The protein operates within glycolipid biosynthesis; lipid IV(A) biosynthesis; lipid IV(A) from (3R)-3-hydroxytetradecanoyl-[acyl-carrier-protein] and UDP-N-acetyl-alpha-D-glucosamine: step 6/6. Transfers the gamma-phosphate of ATP to the 4'-position of a tetraacyldisaccharide 1-phosphate intermediate (termed DS-1-P) to form tetraacyldisaccharide 1,4'-bis-phosphate (lipid IVA). In Salmonella newport (strain SL254), this protein is Tetraacyldisaccharide 4'-kinase.